Reading from the N-terminus, the 543-residue chain is Chaperonin GroEL 1 (543 aa).

ATP-binding positions include 29 to 32 (TLGP), 86 to 90 (DGTTT), Gly-413, 479 to 481 (NAA), and Asp-495.

This sequence belongs to the chaperonin (HSP60) family. As to quaternary structure, forms a cylinder of 14 subunits composed of two heptameric rings stacked back-to-back. Interacts with the co-chaperonin GroES.

The protein localises to the cytoplasm. It catalyses the reaction ATP + H2O + a folded polypeptide = ADP + phosphate + an unfolded polypeptide.. Functionally, together with its co-chaperonin GroES, plays an essential role in assisting protein folding. The GroEL-GroES system forms a nano-cage that allows encapsulation of the non-native substrate proteins and provides a physical environment optimized to promote and accelerate protein folding. This is Chaperonin GroEL 1 from Prochlorococcus marinus (strain NATL2A).